Consider the following 672-residue polypeptide: Inner kinetochore subunit mis6 (672 aa).

Belongs to the CENP-I/CTF3 family. As to quaternary structure, component of the inner kinetochore constitutive centromere-associated network (CCAN) (also known as central kinetochore Sim4 complex in fission yeast), which is composed of at least cnl2, cnp3, cnp20, fta1, fta2, fta3, fta4, fta6, fta7, mal2, mhf1, mhf2, mis6, mis15, mis17, sim4 and wip1. Interacts with cnp1, sim4, mis15 and mis17.

Its subcellular location is the nucleus. It localises to the chromosome. It is found in the centromere. In terms of biological role, component of the kinetochore, a multiprotein complex that assembles on centromeric DNA and attaches chromosomes to spindle microtubules, mediating chromosome segregation and sister chromatid segregation during meiosis and mitosis. Component of the inner kinetochore constitutive centromere-associated network (CCAN), which serves as a structural platform for outer kinetochore assembly. Required for the localization of cnp1 to the centromere. The sequence is that of Inner kinetochore subunit mis6 (mis6) from Schizosaccharomyces pombe (strain 972 / ATCC 24843) (Fission yeast).